We begin with the raw amino-acid sequence, 179 residues long: Large ribosomal subunit protein uL5 (179 aa).

Belongs to the universal ribosomal protein uL5 family. In terms of assembly, part of the 50S ribosomal subunit; part of the 5S rRNA/L5/L18/L25 subcomplex. Contacts the 5S rRNA and the P site tRNA. Forms a bridge to the 30S subunit in the 70S ribosome.

Functionally, this is one of the proteins that bind and probably mediate the attachment of the 5S RNA into the large ribosomal subunit, where it forms part of the central protuberance. In the 70S ribosome it contacts protein S13 of the 30S subunit (bridge B1b), connecting the 2 subunits; this bridge is implicated in subunit movement. Contacts the P site tRNA; the 5S rRNA and some of its associated proteins might help stabilize positioning of ribosome-bound tRNAs. This is Large ribosomal subunit protein uL5 from Staphylococcus saprophyticus subsp. saprophyticus (strain ATCC 15305 / DSM 20229 / NCIMB 8711 / NCTC 7292 / S-41).